Consider the following 597-residue polypeptide: Aspartate--tRNA(Asp/Asn) ligase (597 aa).

Glu178 is an L-aspartate binding site. An aspartate region spans residues 202–205 (QLFK). Arg224 contributes to the L-aspartate binding site. Residues 224-226 (RDE) and Gln233 each bind ATP. His458 contacts L-aspartate. Glu488 is an ATP binding site. Residue Arg495 coordinates L-aspartate. Position 540–543 (540–543 (GLDR)) interacts with ATP.

This sequence belongs to the class-II aminoacyl-tRNA synthetase family. Type 1 subfamily. As to quaternary structure, homodimer.

It is found in the cytoplasm. The enzyme catalyses tRNA(Asx) + L-aspartate + ATP = L-aspartyl-tRNA(Asx) + AMP + diphosphate. In terms of biological role, aspartyl-tRNA synthetase with relaxed tRNA specificity since it is able to aspartylate not only its cognate tRNA(Asp) but also tRNA(Asn). Reaction proceeds in two steps: L-aspartate is first activated by ATP to form Asp-AMP and then transferred to the acceptor end of tRNA(Asp/Asn). In Cyanothece sp. (strain PCC 7425 / ATCC 29141), this protein is Aspartate--tRNA(Asp/Asn) ligase.